The primary structure comprises 405 residues: MGSYMNKTSVVKVGNVLIGGDNPVVVQSMTDTYTADVEKTVKQILALHKAGSEIVRITVNDESAAAAVPEIVKELAKHDCHVPLVGDFHYNGHTLLSKYPECAKALAKYRINPGNVGFGKKKDTQFAEIIKIAIANDKPVRIGVNWGSLDQALLARLIDENNAQENPLSLQQIMHKALITSALESAKYAEELGLAKDKIIISCKVSEVQDLIAVYQKLAKECGYALHLGLTEAGMGTKGIVASAVSLGILLQQGIGNTIRVSLTPAPNAPRTEEVRVCREILQNLGMRTFTPSVTSCPGCGRTTSSFFRELTSKVKDHLDEKMHTWKEQYHGVEAMKVAVMGCVVNGPGESKNADIGISLPGSGESPVAPVFIDGKKAHTLRGDNISEEFIEIVENYVKNRYGKK.

The [4Fe-4S] cluster site is built by Cys-297, Cys-300, Cys-343, and Glu-350.

The protein belongs to the IspG family. Requires [4Fe-4S] cluster as cofactor.

It carries out the reaction (2E)-4-hydroxy-3-methylbut-2-enyl diphosphate + oxidized [flavodoxin] + H2O + 2 H(+) = 2-C-methyl-D-erythritol 2,4-cyclic diphosphate + reduced [flavodoxin]. It functions in the pathway isoprenoid biosynthesis; isopentenyl diphosphate biosynthesis via DXP pathway; isopentenyl diphosphate from 1-deoxy-D-xylulose 5-phosphate: step 5/6. Converts 2C-methyl-D-erythritol 2,4-cyclodiphosphate (ME-2,4cPP) into 1-hydroxy-2-methyl-2-(E)-butenyl 4-diphosphate. The polypeptide is 4-hydroxy-3-methylbut-2-en-1-yl diphosphate synthase (flavodoxin) (Francisella tularensis subsp. tularensis (strain FSC 198)).